Consider the following 284-residue polypeptide: 2,3,4,5-tetrahydropyridine-2,6-dicarboxylate N-succinyltransferase (284 aa).

Substrate-binding residues include Arg-111 and Asp-148.

Belongs to the transferase hexapeptide repeat family. Homotrimer.

The protein resides in the cytoplasm. It catalyses the reaction (S)-2,3,4,5-tetrahydrodipicolinate + succinyl-CoA + H2O = (S)-2-succinylamino-6-oxoheptanedioate + CoA. The protein operates within amino-acid biosynthesis; L-lysine biosynthesis via DAP pathway; LL-2,6-diaminopimelate from (S)-tetrahydrodipicolinate (succinylase route): step 1/3. This is 2,3,4,5-tetrahydropyridine-2,6-dicarboxylate N-succinyltransferase from Brucella melitensis biotype 2 (strain ATCC 23457).